The following is a 238-amino-acid chain: 2-phytyl-1,4-naphtoquinone methyltransferase (238 aa).

This sequence belongs to the class I-like SAM-binding methyltransferase superfamily. MenG/UbiE family.

The catalysed reaction is demethylphylloquinol + S-adenosyl-L-methionine = phylloquinol + S-adenosyl-L-homocysteine + H(+). It participates in cofactor biosynthesis; phylloquinone biosynthesis. In terms of biological role, methyltransferase required for the conversion of 2-phytyl-1,4-beta-naphthoquinol to phylloquinol. The sequence is that of 2-phytyl-1,4-naphtoquinone methyltransferase from Synechocystis sp. (strain ATCC 27184 / PCC 6803 / Kazusa).